Consider the following 149-residue polypeptide: Transthyretin (149 aa).

The first 20 residues, 1–20, serve as a signal peptide directing secretion; the sequence is MAFHSLLLLCLAGLLFVSEA. Cys-32 bears the Sulfocysteine mark. Position 37 (Lys-37) interacts with L-thyroxine. Glu-64 carries the post-translational modification 4-carboxyglutamate. Positions 76 and 139 each coordinate L-thyroxine.

It belongs to the transthyretin family. In terms of assembly, homotetramer. Dimer of dimers. In the homotetramer, subunits assemble around a central channel that can accommodate two ligand molecules. Interacts with RBP4. Sulfonation of the reactive cysteine Cys-32 enhances the stability of the native conformation of TTR, avoiding misassembly of the protein leading to amyloid formation. Detected in plasma (at protein level). Detected in liver.

It localises to the secreted. Thyroid hormone-binding protein. Probably transports thyroxine from the bloodstream to the brain. The chain is Transthyretin (TTR) from Petaurus breviceps (Australian sugar glider).